The sequence spans 246 residues: Probable transcriptional regulatory protein ACP_0521 (246 aa).

Belongs to the TACO1 family.

Its subcellular location is the cytoplasm. This Acidobacterium capsulatum (strain ATCC 51196 / DSM 11244 / BCRC 80197 / JCM 7670 / NBRC 15755 / NCIMB 13165 / 161) protein is Probable transcriptional regulatory protein ACP_0521.